The chain runs to 336 residues: Pyridoxal 5'-phosphate synthase subunit PdxS (336 aa).

Asp-64 contacts D-ribose 5-phosphate. The active-site Schiff-base intermediate with D-ribose 5-phosphate is the Lys-121. Gly-193 contacts D-ribose 5-phosphate. Lys-205 lines the D-glyceraldehyde 3-phosphate pocket. D-ribose 5-phosphate contacts are provided by residues Gly-254 and 275–276 (GS).

Belongs to the PdxS/SNZ family. In the presence of PdxT, forms a dodecamer of heterodimers.

It carries out the reaction aldehydo-D-ribose 5-phosphate + D-glyceraldehyde 3-phosphate + L-glutamine = pyridoxal 5'-phosphate + L-glutamate + phosphate + 3 H2O + H(+). It participates in cofactor biosynthesis; pyridoxal 5'-phosphate biosynthesis. Catalyzes the formation of pyridoxal 5'-phosphate from ribose 5-phosphate (RBP), glyceraldehyde 3-phosphate (G3P) and ammonia. The ammonia is provided by the PdxT subunit. Can also use ribulose 5-phosphate and dihydroxyacetone phosphate as substrates, resulting from enzyme-catalyzed isomerization of RBP and G3P, respectively. This chain is Pyridoxal 5'-phosphate synthase subunit PdxS, found in Pyrobaculum aerophilum (strain ATCC 51768 / DSM 7523 / JCM 9630 / CIP 104966 / NBRC 100827 / IM2).